The sequence spans 79 residues: GVSFHVGSGAEDPKSFVKAVEDSRFVFDQAAEVGFDLKVLDVGGGFSEDTFERFAATLSDALDEYFPPHIRIIAEPGRI.

Residues Ser8, Gly45, and 75–78 (EPGR) each bind pyridoxal 5'-phosphate.

This sequence belongs to the Orn/Lys/Arg decarboxylase class-II family. As to quaternary structure, homodimer. Only the dimer is catalytically active, as the active sites are constructed of residues from both monomers. It depends on pyridoxal 5'-phosphate as a cofactor.

It localises to the cytoplasm. The catalysed reaction is L-ornithine + H(+) = putrescine + CO2. The protein operates within amine and polyamine biosynthesis; putrescine biosynthesis via L-ornithine pathway; putrescine from L-ornithine: step 1/1. Inhibited by antizyme (AZ) OAZ1 in response to polyamine levels. AZ inhibits the assembly of the functional homodimer by binding to ODC monomers and targeting them for ubiquitin-independent proteolytic destruction by the 26S proteasome. Its function is as follows. Catalyzes the first and rate-limiting step of polyamine biosynthesis that converts ornithine into putrescine, which is the precursor for the polyamines, spermidine and spermine. Polyamines are essential for cell proliferation and are implicated in cellular processes, ranging from DNA replication to apoptosis. The chain is Ornithine decarboxylase (ODC) from Paracoccidioides brasiliensis.